The chain runs to 251 residues: 1-(5-phosphoribosyl)-5-[(5-phosphoribosylamino)methylideneamino] imidazole-4-carboxamide isomerase (251 aa).

D7 functions as the Proton acceptor in the catalytic mechanism. Residue D131 is the Proton donor of the active site.

The protein belongs to the HisA/HisF family.

Its subcellular location is the cytoplasm. It catalyses the reaction 1-(5-phospho-beta-D-ribosyl)-5-[(5-phospho-beta-D-ribosylamino)methylideneamino]imidazole-4-carboxamide = 5-[(5-phospho-1-deoxy-D-ribulos-1-ylimino)methylamino]-1-(5-phospho-beta-D-ribosyl)imidazole-4-carboxamide. Its pathway is amino-acid biosynthesis; L-histidine biosynthesis; L-histidine from 5-phospho-alpha-D-ribose 1-diphosphate: step 4/9. The sequence is that of 1-(5-phosphoribosyl)-5-[(5-phosphoribosylamino)methylideneamino] imidazole-4-carboxamide isomerase from Blochmanniella floridana.